The primary structure comprises 367 residues: 5-amino-6-(D-ribitylamino)uracil--L-tyrosine 4-hydroxyphenyl transferase (367 aa).

The region spanning 56–290 is the Radical SAM core domain; the sequence is VTYVRNQNIN…MFAVARLFLD (235 aa). The [4Fe-4S] cluster site is built by Cys70, Cys74, and Cys77.

The protein belongs to the radical SAM superfamily. CofH family. Consists of two subunits, CofG and CofH. Requires [4Fe-4S] cluster as cofactor.

The enzyme catalyses 5-amino-6-(D-ribitylamino)uracil + L-tyrosine + S-adenosyl-L-methionine = 5-amino-5-(4-hydroxybenzyl)-6-(D-ribitylimino)-5,6-dihydrouracil + 2-iminoacetate + 5'-deoxyadenosine + L-methionine + H(+). The protein operates within cofactor biosynthesis; coenzyme F0 biosynthesis. Catalyzes the radical-mediated synthesis of 5-amino-5-(4-hydroxybenzyl)-6-(D-ribitylimino)-5,6-dihydrouracil from 5-amino-6-(D-ribitylamino)uracil and L-tyrosine. This chain is 5-amino-6-(D-ribitylamino)uracil--L-tyrosine 4-hydroxyphenyl transferase, found in Methanoculleus marisnigri (strain ATCC 35101 / DSM 1498 / JR1).